The chain runs to 161 residues: Small ribosomal subunit protein bS6 (161 aa).

The tract at residues 107–161 (KGDERERGFRGPKPAGRFESGRGGAGGARRGYDDREEFRARNEREDGRDTDGEAE) is disordered. Residues 136-161 (RGYDDREEFRARNEREDGRDTDGEAE) show a composition bias toward basic and acidic residues.

This sequence belongs to the bacterial ribosomal protein bS6 family.

Functionally, binds together with bS18 to 16S ribosomal RNA. The sequence is that of Small ribosomal subunit protein bS6 from Gluconacetobacter diazotrophicus (strain ATCC 49037 / DSM 5601 / CCUG 37298 / CIP 103539 / LMG 7603 / PAl5).